The sequence spans 2968 residues: MDSVSGLHAALSLCASDSAKDRARAHALLPPIFANAQNLRVFQAAAATHGGAPWLALFHCLFRAVALEKRAVLRGSSNAQAAARLAHAIRIVRLVAEQAVHLIARKPLIALVAHMRHQLVLPPRIFAPALLDYSKALSTLLVYPPHVESLDRHTWLALMSMCFAAILGDDHVSDDQMDDADMLGVAAELERLDAENVPPHRPPVTLNTSSLVQIIPALLCSTVSPIVPPTMKSGDTLTAGQKVGLGIVLKIRRFFTMYPHVTIYHLHLLTALNTVLSDMELNCRDLFLLGSVKIFPHLVTLWAAPERDRDRRIPEQIAIAIHRILPHLAHSAELQRAQDVTENVERLMEMLAKESTMSRGIEPLDLGTFPSTATPSRQSTPSKRRKLENPLASLISAVGMGRPESRLIALQTLVFVIDRHWSKLAKDIQSDIRRTLVSLLTDDNETLQSWAYIALSTIILSSYTAGANENNDDDQSHNGQSQDDWKQVWSFALRKCHLPGSSRSASHAAAVLLQFDKVDSPSTIRGIQTMLTTIAVQGPPTAHDSVCALYSIALEAARSDIQLYSLNLEEQVLSWLEKTFAREKFERDKMDQRLDQATPGDILRLFSAVSRIQYHVPLAEPVTKEFLPDSAVVSYALERAKTQPIRDFLLYHTCPTPPPPPPPLDDSHTTPLLAASENHSTFLGGRPRRLSELLLSILNATTAQWETKPVISSGERPRRCVDLVALGLAFQGLLQLDGYIPHAACINAAIRLLHLLKPSLTSSDLSIPSLDLVWRGLRCLADVPLVKEEEEEEEEEDWPILVKPDVQSGIRQDLLPPTMYDTPPQEEEAESSDPPKRFTQYPPTFPSTLLPTPTAITPSSLSTFQSQSNSASLVHAIWRLPDVSAALQGLFSVCLQVITRSSSSTSSGQPTQLSHDDDDDGEDDDDDFAVASGETTSAPLPEKAAELRASTSLLRSAVAFRLQGVMLVSAGAAGGAQSKAYKDTQLVNSFLQADGLRAVEIGWAICEAMQKGWLRLGIDAVDLVVASLGNMLNSYGYARDERLLQLCLEFLKCSAPVWMGNDHSNDDDLKDEAMRLVCYIATKITAGSITSWRVRLAMLRFIEAFLHYDSASKLWADCMVQEEAEEEEQDVSMEDENHLFHYIAQSLSDPDMRVRARAATTAASALYRPSIHPSEHPIIYDQVSNSQAGDPTFAEHYLSYVLWKLNCCIASAKQRQTVIFDLYEAAIGGTEYSDHLQAGLNAVARRLGLPSITALYLPYAPTTTISHDTSRSSAIAFVLNTTHRLFGLSNRSAFFTACLEHAGAYMLYCGKIGLFTSACDAAGVLPEDLALQLSVAAAAMAMVLPLSNDKATNVSMNKCKAEALALLSSFPGISGPDAAEKFLHSYANGVAAHLWELMDLESSVDEIVAWFDKTEKESAAGIAFAQMMAHDNAKTGRVKAINPAASFQSIHNVCRFLEKNYSSISLHAFTFAAILRLTSLINNAFLVSEQRRYLRALAMLLSVHQGTLQRPLIWEAFLTETITLLLQPDICRTVLSMVMWAFDWLESLSSTPSKLVNIFCQLGEIRIELGGSGTPGSQPNQMGDALEDWIVKMSPKWFKSQISQEAFERAVALWPDSLRSRLSVHASPLSLRDLDDLSQNDAVHNAGQLCKHFLHLADADHGQDVVSVFVDSTFWSLKDKISSVWDKEGINAFQDLLYLCNGEVRAPSLNFYGQDTFSKALNATTGEHKKTEAMNALYHAMCKTMVQLLHDRRPQIRSAAYRCLQRMKPILTGKDLKELPADVSDVVPILVPIPIGSVRQSQAMKLDGVINNATWNKKAEHFATWSLELSRLLCKTASQHDKFFLSFEPLLSTPLLPLHHFLGHFVHAALVCSRSMSSERSKAISEHFETVLQNPFASIEAVRSIVNIVLQLRRYEHPFTSGMLGYNAWLSVNFVDLSKAAVKCGLYVSALLFLELANDQGESLDLAEPRVRQIMYDIYSNVEDPDGFYGIHNKDIRDSLRRRLEHEGLSWQALGWAGAVYNVDGNDSRSAIPVLHHLHDIGLSRLASVVATETRTSGSVPLDDPFFADLSWRTGDWNLPIGRESSATSSGLLYSALSAVHRSKSYESASKIVDKAVRAEMTRLGGLQKEMLTSIQSTVTNLLCLRELNRWLDPQLQQGMQEAIDRGTLRDLQDINDKFEFASAERIIATRLSVFDSVKQRESQDMIGDALTPKMELVTKAESTCHIKLSRLALKSNNLQAAINSLTALQKLQTDVGVIDEAQDVFCEVLWKQGEHTLAIQLLEDLLLREKEKKSKGQRIPALEGRLAHWASEARLKAANEIFGMFSNVTKSIKRSTADVSEHAEIFYQFACFADKQYVSQSSSADVKQLKEYSKLRASQALRLSARQSRARESDQKDSAVREAERDEEKLKKFEMQQKQYLNAALQFYAEAVSMSDNFNDCITRLVTLWLENDENEESNVTFSRAAHKVPSYKFIFLGPQLAARLHRPESPTIFNSTLNGLMFRMSQDHPYHTLYHVIPLLWEHKQPQSTNSSMLGRKSAADDIMRRLASSASNRLAVGAAKSMKRFVAIAMEWTSFFEKDKRLEYKLPSDSPLRKAPRDIPVATSTPSIDVTCQYKDIATFDHFSEWYTRAGGLSRPKVMTCFDSNGQKYTQLFKKDDGFRQDAVMEQIFVLVNDLLNRNRQTRSRKLRYRTYGVLALPEATGVIEFVVGTKPLIKYLPPAHEKYHPKDITSHDFLKAMQEVQSVKNNDEKIIQVWTKLKKRFRPVMRHLFTEKYRDPMAWFSMRLTYARSLAVTSIVGWVLEIGDRHCSNILMDECTGELVHIDFGIAFGAGRILPIPELVPFRLTDDLVDALGVTGVNGTFRQCSQLVLQTLIDSSDVILTILEVFKQDPLHTWMVDDKMKKAQDGNHKMYPERGQEKADRIMRETRENLSKELSVQYRVNQLIQEARDVNNLATIFRGWHSWL.

4 disordered regions span residues 364 to 386 (LDLGTFPSTATPSRQSTPSKRRK), 812 to 854 (QDLL…PTPT), 902 to 935 (SSSTSSGQPTQLSHDDDDDGEDDDDDFAVASGET), and 2386 to 2408 (ARQSRARESDQKDSAVREAERDE). The span at 369–381 (FPSTATPSRQSTP) shows a compositional bias: polar residues. Residues 916-928 (DDDDDGEDDDDDF) are compositionally biased toward acidic residues. Residues 1936 to 2524 (DLSKAAVKCG…LYHVIPLLWE (589 aa)) enclose the FAT domain. Positions 2390 to 2408 (RARESDQKDSAVREAERDE) are enriched in basic and acidic residues. The 313-residue stretch at 2626–2938 (FSEWYTRAGG…ETRENLSKEL (313 aa)) folds into the PI3K/PI4K catalytic domain. The interval 2632 to 2638 (RAGGLSR) is G-loop. Residues 2805 to 2813 (EIGDRHCSN) form a catalytic loop region. The tract at residues 2825-2849 (HIDFGIAFGAGRILPIPELVPFRLT) is activation loop. In terms of domain architecture, FATC spans 2932–2968 (ENLSKELSVQYRVNQLIQEARDVNNLATIFRGWHSWL).

Belongs to the PI3/PI4-kinase family. ATM subfamily. As to quaternary structure, associates with DNA double-strand breaks.

The protein resides in the nucleus. It is found in the chromosome. The protein localises to the telomere. The catalysed reaction is L-seryl-[protein] + ATP = O-phospho-L-seryl-[protein] + ADP + H(+). The enzyme catalyses L-threonyl-[protein] + ATP = O-phospho-L-threonyl-[protein] + ADP + H(+). Serine/threonine protein kinase which activates checkpoint signaling upon genotoxic stresses such as ionizing radiation (IR), ultraviolet light (UV), or DNA replication stalling, thereby acting as a DNA damage sensor. Recognizes the substrate consensus sequence [ST]-Q. Phosphorylates histone H2A to form H2AS128ph (gamma-H2A) at sites of DNA damage, involved in the regulation of DNA damage response mechanism. Required for the control of telomere length and genome stability. The chain is Serine/threonine-protein kinase TEL1 (TEL1) from Cryptococcus neoformans var. neoformans serotype D (strain B-3501A) (Filobasidiella neoformans).